Reading from the N-terminus, the 436-residue chain is Proline--tRNA ligase (436 aa).

It belongs to the class-II aminoacyl-tRNA synthetase family. ProS type 2 subfamily. Homodimer.

It is found in the cytoplasm. It catalyses the reaction tRNA(Pro) + L-proline + ATP = L-prolyl-tRNA(Pro) + AMP + diphosphate. Functionally, catalyzes the attachment of proline to tRNA(Pro) in a two-step reaction: proline is first activated by ATP to form Pro-AMP and then transferred to the acceptor end of tRNA(Pro). In Neorickettsia sennetsu (strain ATCC VR-367 / Miyayama) (Ehrlichia sennetsu), this protein is Proline--tRNA ligase.